The following is a 212-amino-acid chain: Ras-related protein Rab-17 (212 aa).

Position 29 is a phosphoserine (Ser-29). 4 residues coordinate GTP: Gly-31, Lys-32, Ser-33, and Thr-50. Residues Ser-33, Thr-50, and Asp-73 each coordinate Mg(2+). The short motif at 43-54 (DFKSILPTVGCA) is the Switch 1 element. The Switch 2 signature appears at 75–91 (AGQEKYHSVCHLYFRGA). 5 residues coordinate GTP: Gly-76, Asn-132, Lys-133, Asp-135, and Ala-163. 2 S-geranylgeranyl cysteine lipidation sites follow: Cys-209 and Cys-210.

The protein belongs to the small GTPase superfamily. Rab family. Requires Mg(2+) as cofactor. In terms of tissue distribution, expressed in melanocytes (at protein level).

Its subcellular location is the recycling endosome membrane. It localises to the melanosome. The protein localises to the cell projection. It is found in the dendrite. It catalyses the reaction GTP + H2O = GDP + phosphate + H(+). With respect to regulation, regulated by guanine nucleotide exchange factors (GEFs) which promote the exchange of bound GDP for free GTP. Regulated by GTPase activating proteins (GAPs) which increase the GTP hydrolysis activity. Inhibited by GDP dissociation inhibitors (GDIs). In terms of biological role, the small GTPases Rab are key regulators of intracellular membrane trafficking, from the formation of transport vesicles to their fusion with membranes. Rabs cycle between an inactive GDP-bound form and an active GTP-bound form that is able to recruit to membranes different set of downstream effectors directly responsible for vesicle formation, movement, tethering and fusion. RAB17 is involved in transcytosis, the directed movement of endocytosed material through the cell and its exocytosis from the plasma membrane at the opposite side. Mainly observed in epithelial cells, transcytosis mediates for instance, the transcellular transport of immunoglobulins from the basolateral surface to the apical surface. Most probably controls membrane trafficking through apical recycling endosomes in a post-endocytic step of transcytosis. Required for melanosome transport and release from melanocytes, it also regulates dendrite and dendritic spine development. May also play a role in cell migration. The sequence is that of Ras-related protein Rab-17 from Homo sapiens (Human).